Reading from the N-terminus, the 287-residue chain is Large ribosomal subunit protein uL2 (287 aa).

The segment at 221-287 (RGSVMNPCDH…SKRSRGGRDS (67 aa)) is disordered. Basic residues predominate over residues 258-287 (KTRKKNKPSNKLVVRRRRRISKRSRGGRDS).

This sequence belongs to the universal ribosomal protein uL2 family. As to quaternary structure, part of the 50S ribosomal subunit. Forms a bridge to the 30S subunit in the 70S ribosome.

One of the primary rRNA binding proteins. Required for association of the 30S and 50S subunits to form the 70S ribosome, for tRNA binding and peptide bond formation. It has been suggested to have peptidyltransferase activity; this is somewhat controversial. Makes several contacts with the 16S rRNA in the 70S ribosome. In Prochlorococcus marinus (strain MIT 9215), this protein is Large ribosomal subunit protein uL2.